Here is a 76-residue protein sequence, read N- to C-terminus: RNA-binding protein KhpA (76 aa).

The KH domain maps to 29–76; it reads QNIIELRVSPKDVGKVIGKNGRIAKSLRAILTAASVKAGKNFSLEIID.

The protein belongs to the KhpA RNA-binding protein family. In terms of assembly, forms a complex with KhpB.

It is found in the cytoplasm. A probable RNA chaperone. Forms a complex with KhpB which binds to cellular RNA and controls its expression. Plays a role in peptidoglycan (PG) homeostasis and cell length regulation. The sequence is that of RNA-binding protein KhpA from Leptospira interrogans serogroup Icterohaemorrhagiae serovar copenhageni (strain Fiocruz L1-130).